The chain runs to 166 residues: Large ribosomal subunit protein mL49 (166 aa).

This sequence belongs to the mitochondrion-specific ribosomal protein mL49 family. In terms of assembly, component of the mitochondrial ribosome large subunit (39S) which comprises a 16S rRNA and about 50 distinct proteins. Interacts with OXA1L.

Its subcellular location is the mitochondrion. The chain is Large ribosomal subunit protein mL49 (MRPL49) from Bos taurus (Bovine).